A 440-amino-acid chain; its full sequence is Damage-control phosphatase ARMT1 (440 aa).

2 residues coordinate Mn(2+): Asp252 and Asn253. Position 252-253 (Asp252–Asn253) interacts with substrate. 2 residues coordinate S-adenosyl-L-methionine: Glu257 and Asp290. Asp290 provides a ligand contact to Mn(2+). Substrate is bound by residues Asp366–Arg370 and Lys403. A Subfamily III RTxK motif motif is present at residues Arg400–Lys403.

The protein belongs to the damage-control phosphatase family. Sugar phosphate phosphatase III subfamily. Requires Mn(2+) as cofactor. It depends on Ni(2+) as a cofactor. Automethylated.

The catalysed reaction is beta-D-fructose 1-phosphate + H2O = D-fructose + phosphate. The enzyme catalyses beta-D-fructose 6-phosphate = dihydroxyacetone + D-glyceraldehyde 3-phosphate. It carries out the reaction L-glutamyl-[protein] + S-adenosyl-L-methionine = [protein]-L-glutamate 5-O-methyl ester + S-adenosyl-L-homocysteine. Its function is as follows. Metal-dependent phosphatase that shows phosphatase activity against several substrates, including fructose-1-phosphate and fructose-6-phosphate. Its preference for fructose-1-phosphate, a strong glycating agent that causes DNA damage rather than a canonical yeast metabolite, suggests a damage-control function in hexose phosphate metabolism. Has also been shown to have O-methyltransferase activity that methylates glutamate residues of target proteins to form gamma-glutamyl methyl ester residues. Possibly methylates PCNA, suggesting it is involved in the DNA damage response. This chain is Damage-control phosphatase ARMT1, found in Xenopus tropicalis (Western clawed frog).